A 581-amino-acid chain; its full sequence is MVASSKMMNVRVTTMDAELEFAIQQGTTGKQLFDQVVKTIGLREVWFFGLQYTDSKGDNTWIKLYKKVMSQDVQKGDPLLFKFRAKFYPEDVAEELIQDITLRLFYLQVKNAILSDEIYCPPETSVLLASYAVQARHGDYNKGTHVPGFLAKDRLLPQRVIDQHKMSKDEWENSITTWWQEHRGLLREDAMMEYLKIAQDLEMYGVNYFEIRNKKGTELWLGVDALGLNIYEKEDRLTPKIGFPWSEIRNISFNDRKFIIKPIDKKAPDFVFFAPRVRINKRILALCMGNHELYMRRRKPDTIDVQQMKAQARDEKNAKQQEREKLQLALAARERAEKKQQEYEDRLRSMQEEMERKQANLSEAQDTIRRLQEQLNQVQAAKEELEQRQNELHEMMQRLEETKNMEATERAKLEEEIRVKQLEMQKIQEEVTLKDSETKRLHEEVEEAIRKQVAKGSRAAAALQAATTTPKHHHVEEEEENEEELINGENGTQDFSKDFDTDEHIKDPVEERRTLAERNERLQDQLKALKQDLALSRDDTMETPNDKIHRENVRQGRDKYKTLREIRKGNTKRRVDQFENM.

One can recognise an FERM domain in the interval 8 to 298 (MNVRVTTMDA…GNHELYMRRR (291 aa)). A disordered region spans residues 452 to 519 (QVAKGSRAAA…EERRTLAERN (68 aa)). Residues 459–469 (AAAALQAATTT) show a composition bias toward low complexity. The span at 477-486 (EEEENEEELI) shows a compositional bias: acidic residues. The segment covering 495-519 (FSKDFDTDEHIKDPVEERRTLAERN) has biased composition (basic and acidic residues). At Thr-562 the chain carries Phosphothreonine.

In terms of assembly, interacts with cytoskeletal actin.

Its subcellular location is the cell junction. The protein resides in the adherens junction. It is found in the cell projection. It localises to the microvillus. The protein localises to the rhabdomere. Its subcellular location is the cell membrane. The protein resides in the cytoplasm. It is found in the cytoskeleton. Involved in connections of major cytoskeletal structures to the plasma membrane. This chain is Moesin/ezrin/radixin homolog 1, found in Anopheles gambiae (African malaria mosquito).